Consider the following 873-residue polypeptide: Alanine--tRNA ligase (873 aa).

Residues H563, H567, C664, and H668 each contribute to the Zn(2+) site.

This sequence belongs to the class-II aminoacyl-tRNA synthetase family. It depends on Zn(2+) as a cofactor.

It localises to the cytoplasm. It carries out the reaction tRNA(Ala) + L-alanine + ATP = L-alanyl-tRNA(Ala) + AMP + diphosphate. Functionally, catalyzes the attachment of alanine to tRNA(Ala) in a two-step reaction: alanine is first activated by ATP to form Ala-AMP and then transferred to the acceptor end of tRNA(Ala). Also edits incorrectly charged Ser-tRNA(Ala) and Gly-tRNA(Ala) via its editing domain. This Aromatoleum aromaticum (strain DSM 19018 / LMG 30748 / EbN1) (Azoarcus sp. (strain EbN1)) protein is Alanine--tRNA ligase.